A 332-amino-acid polypeptide reads, in one-letter code: Glycerol-3-phosphate dehydrogenase [NAD(P)+] (332 aa).

The NADPH site is built by tryptophan 11, arginine 30, and lysine 108. Residues lysine 108, glycine 137, and serine 139 each contribute to the sn-glycerol 3-phosphate site. Alanine 141 contacts NADPH. Sn-glycerol 3-phosphate contacts are provided by lysine 192, aspartate 245, serine 255, arginine 256, and asparagine 257. Lysine 192 functions as the Proton acceptor in the catalytic mechanism. Arginine 256 is a binding site for NADPH. NADPH-binding residues include valine 280 and glutamate 282.

The protein belongs to the NAD-dependent glycerol-3-phosphate dehydrogenase family.

It localises to the cytoplasm. It carries out the reaction sn-glycerol 3-phosphate + NAD(+) = dihydroxyacetone phosphate + NADH + H(+). It catalyses the reaction sn-glycerol 3-phosphate + NADP(+) = dihydroxyacetone phosphate + NADPH + H(+). The protein operates within membrane lipid metabolism; glycerophospholipid metabolism. Functionally, catalyzes the reduction of the glycolytic intermediate dihydroxyacetone phosphate (DHAP) to sn-glycerol 3-phosphate (G3P), the key precursor for phospholipid synthesis. In Burkholderia vietnamiensis (strain G4 / LMG 22486) (Burkholderia cepacia (strain R1808)), this protein is Glycerol-3-phosphate dehydrogenase [NAD(P)+].